We begin with the raw amino-acid sequence, 292 residues long: MFEGSITALVTPFADDRIDEVALHDLVEWQIEEGSFGLVPCGTTGESPTLSKSEHEQVVEITIKTANGRVPVIAGAGSNSTAEAIAFVRHAQNAGADGVLIVSPYYNKPTQEGIYQHFKAIDAASTIPIIVYNIPGRSAIEIHVETLARIFEDCPNVKGVKDATGNLLRPSLERMACGEDFNLLTGEDGTALGYMAHGGHGCISVTANVAPALCADFQQACLNGDFAAALKLQDRLMPLHRALFLETNPAGAKYALQRLGRMRGDLRLPLVTISPSFQEEIDDAMRHAGILL.

A pyruvate-binding site is contributed by T44. Y132 serves as the catalytic Proton donor/acceptor. Residue K161 is the Schiff-base intermediate with substrate of the active site. I203 contributes to the pyruvate binding site.

This sequence belongs to the DapA family. As to quaternary structure, homotetramer.

It is found in the cytoplasm. It catalyses the reaction L-aspartate 4-semialdehyde + pyruvate = (2S,4S)-4-hydroxy-2,3,4,5-tetrahydrodipicolinate + H2O + H(+). It functions in the pathway amino-acid biosynthesis; L-lysine biosynthesis via DAP pathway; (S)-tetrahydrodipicolinate from L-aspartate: step 3/4. Is feedback inhibited by lysine. Is competitively inhibited by 2-oxobutyrate with respect to pyruvate. In terms of biological role, catalyzes the condensation of (S)-aspartate-beta-semialdehyde [(S)-ASA] and pyruvate to 4-hydroxy-tetrahydrodipicolinate (HTPA). This chain is 4-hydroxy-tetrahydrodipicolinate synthase, found in Rhizobium meliloti (Ensifer meliloti).